The following is a 299-amino-acid chain: N-acetylaspartate synthetase (299 aa).

Positions 44-57 (AAPGPAAAPPPAAG) are enriched in pro residues. The segment at 44–70 (AAPGPAAAPPPAAGPQPHGGTGGAGPP) is disordered. The span at 60-70 (PHGGTGGAGPP) shows a compositional bias: gly residues. Residues 118–138 (YALLAALCFAVTRSLLLTCLV) traverse the membrane as a helical segment. The region spanning 143-280 (LALRYYYSRK…VLPGMTLSLA (138 aa)) is the N-acetyltransferase domain.

This sequence belongs to the NAT8 family. Expressed in brain, including in mesencephalic dopaminergic neurons of the substantia nigra and ventral tegmental area and oligodendrocytes. Expressed in cortical pyramidal neurons and granule cells of the hippocampus (at protein level).

The protein resides in the cytoplasm. It localises to the microsome membrane. It is found in the mitochondrion membrane. Its subcellular location is the endoplasmic reticulum membrane. It carries out the reaction L-aspartate + acetyl-CoA = N-acetyl-L-aspartate + CoA + H(+). With respect to regulation, aminooxyacetic acid (AOAA) blocks its activity in both cytoplasm and mitochondria. In terms of biological role, catalyzes the synthesis of N-acetylaspartate acid (NAA) from L-aspartate and acetyl-CoA. Promotes dopamine uptake by regulating TNF-alpha expression. Attenuates methamphetamine-induced inhibition of dopamine uptake. The protein is N-acetylaspartate synthetase (Nat8l) of Rattus norvegicus (Rat).